Consider the following 508-residue polypeptide: Hydroxymethylglutaryl-CoA synthase, mitochondrial (508 aa).

The transit peptide at 1–37 (MQRLLTPVKRILQLTRAVQETSLTPARLLPVAHQRFS) directs the protein to the mitochondrion. Lys-52 carries the N6-succinyllysine modification. The (3S)-3-hydroxy-3-methylglutaryl-CoA site is built by Glu-80 and Ala-81. Lys-83 carries the post-translational modification N6-acetyllysine; alternate. At Lys-83 the chain carries N6-succinyllysine; alternate. Glu-132 acts as the Proton donor/acceptor in catalysis. Cys-166, Asn-204, and Thr-208 together coordinate (3S)-3-hydroxy-3-methylglutaryl-CoA. Residue Cys-166 is the Acyl-thioester intermediate of the active site. An N6-succinyllysine modification is found at Lys-221. At Lys-243 the chain carries N6-acetyllysine. Lys-256 is subject to N6-acetyllysine; alternate. Position 256 is an N6-succinyllysine; alternate (Lys-256). Residues Ser-258 and His-301 each coordinate (3S)-3-hydroxy-3-methylglutaryl-CoA. His-301 (proton donor/acceptor) is an active-site residue. Lys-306 carries the post-translational modification N6-acetyllysine. Lys-310 lines the (3S)-3-hydroxy-3-methylglutaryl-CoA pocket. An N6-acetyllysine; alternate modification is found at Lys-310. An N6-succinyllysine; alternate modification is found at Lys-310. The residue at position 333 (Lys-333) is an N6-succinyllysine. Lys-342, Lys-350, Lys-354, and Lys-358 each carry N6-acetyllysine; alternate. Residues Lys-342, Lys-350, Lys-354, and Lys-358 each carry the N6-succinyllysine; alternate modification. Residues Asn-380 and Ser-414 each contribute to the (3S)-3-hydroxy-3-methylglutaryl-CoA site. Residue Ser-433 is modified to Phosphoserine. Residue Lys-437 is modified to N6-acetyllysine. Ser-440 is modified (phosphoserine). The residue at position 447 (Lys-447) is an N6-acetyllysine; alternate. At Lys-447 the chain carries N6-succinyllysine; alternate. A Phosphoserine modification is found at Ser-456. Lys-473 carries the N6-acetyllysine; alternate modification. Lys-473 is modified (N6-succinyllysine; alternate). Ser-477 bears the Phosphoserine mark.

Belongs to the thiolase-like superfamily. HMG-CoA synthase family. Homodimer. Post-translationally, succinylated. Desuccinylated by SIRT5. Succinylation, at least at Lys-83 and Lys-310, inhibits the enzymatic activity. As to expression, expression in liver is 200-fold higher than in any other tissue. Low expression in colon, kidney, testis, and pancreas. Very low expression in heart and skeletal muscle. Not detected in brain. Highest expression detected in heart and skeletal muscle.

It localises to the mitochondrion. The enzyme catalyses acetoacetyl-CoA + acetyl-CoA + H2O = (3S)-3-hydroxy-3-methylglutaryl-CoA + CoA + H(+). Its pathway is metabolic intermediate biosynthesis; (R)-mevalonate biosynthesis; (R)-mevalonate from acetyl-CoA: step 2/3. Catalyzes the first irreversible step in ketogenesis, condensing acetyl-CoA to acetoacetyl-CoA to form HMG-CoA, which is converted by HMG-CoA reductase (HMGCR) into mevalonate. This Homo sapiens (Human) protein is Hydroxymethylglutaryl-CoA synthase, mitochondrial (HMGCS2).